Consider the following 254-residue polypeptide: Ribosomal protein L11 methyltransferase (254 aa).

Residues Thr-107, Gly-128, Asp-149, Ser-175, and Asn-191 each contribute to the S-adenosyl-L-methionine site.

It belongs to the methyltransferase superfamily. PrmA family.

Its subcellular location is the cytoplasm. It carries out the reaction L-lysyl-[protein] + 3 S-adenosyl-L-methionine = N(6),N(6),N(6)-trimethyl-L-lysyl-[protein] + 3 S-adenosyl-L-homocysteine + 3 H(+). It catalyses the reaction an N-terminal L-alpha-aminoacyl-[protein] + 3 S-adenosyl-L-methionine = an N-terminal trimethyl-L-alpha-aminoacyl-[protein] + 3 S-adenosyl-L-homocysteine + 3 H(+). Functionally, methylates ribosomal protein L11. Preferentially recognizes free L11 before its incorporation into 50S subunits. This function is dispensable for growth and thermostability. The sequence is that of Ribosomal protein L11 methyltransferase from Thermus thermophilus (strain ATCC 27634 / DSM 579 / HB8).